A 547-amino-acid chain; its full sequence is Probable aquaporin-5 (547 aa).

Polar residues predominate over residues 1–13 (MSSSILNNRSARS). Positions 1–208 (MSSSILNNRS…DPRIPPNDRR (208 aa)) are disordered. The Cytoplasmic segment spans residues 1–269 (MSSSILNNRS…QWMNSNFKNH (269 aa)). Positions 15–32 (PAGANPAFNPPAEASSSS) are enriched in low complexity. Composition is skewed to basic and acidic residues over residues 152–169 (EYER…DRYT) and 198–208 (DDPRIPPNDRR). Residues 270–290 (FVAGVGEFIGTTMFLFFAFAG) form a helical membrane-spanning segment. Residues 291 to 316 (TEVANIQADTTNRTTTGESTGSLNVS) lie on the Extracellular side of the membrane. Residues N302 and N314 are each glycosylated (N-linked (GlcNAc...) asparagine). A helical membrane pass occupies residues 317–337 (KLLYISIIFGFSLMVNVWVFF). Over 338 to 363 (RISGGLFNPAVTMAMLMVKAISVTRA) the chain is Cytoplasmic. An NPA 1 motif is present at residues 345 to 347 (NPA). A helical membrane pass occupies residues 364 to 384 (IVLFLAQILGSMLASVVVRYL). Residues 385–400 (FPETFNVRTTLGGGAS) lie on the Extracellular side of the membrane. Residues 401–421 (LVQGVFIEALLTAELVFTIFM) form a helical membrane-spanning segment. Over 422–428 (LAKEKHR) the chain is Cytoplasmic. A helical membrane pass occupies residues 429-449 (ATFIAPVGIGLALFIAEMVGV). Residues 450–475 (QFTGGSLNPARSFGPCVITGSFDTEH) are Extracellular-facing. Positions 457-459 (NPA) match the NPA 2 motif. Residues 476-496 (WIYWVGPAIGSLIAVCFYWFI) form a helical membrane-spanning segment. Residues 497 to 547 (KTLEYEMANPGADGDDLNDPTKNPEKRAEIQASKPVPTAAFGSGKTASILS) are Cytoplasmic-facing. A disordered region spans residues 510 to 547 (GDDLNDPTKNPEKRAEIQASKPVPTAAFGSGKTASILS).

Belongs to the MIP/aquaporin (TC 1.A.8) family.

The protein localises to the membrane. The catalysed reaction is H2O(in) = H2O(out). In terms of biological role, probable water channel that may have redundant functions with FgAQP3. The chain is Probable aquaporin-5 from Gibberella zeae (strain ATCC MYA-4620 / CBS 123657 / FGSC 9075 / NRRL 31084 / PH-1) (Wheat head blight fungus).